A 347-amino-acid polypeptide reads, in one-letter code: MLFPPGIFSEATAFSHKRSIRSISSHSTFDDVTAETDEAPVLAEVEKMPAVVKKVKHGMRKVLESLGILDSKCEQKKKHNKIPSAAAGDSPIKTFGYPFYDTSLGRSLLRPQVGLSFIEGFMQPIKVGAFDWMVQGTVDDVLSFLVCFDDYEAIAEKLGEDGAWHSEGNIGPLYLQLQNTSQYQGDASSILMAYSVEQILGRIDAWGVIDQTIGHWWKPAASLSEKAKSVYDTYQSLKERVPDLTTEKFQEVWNSASTKSGVGKLKELAKLFTLNPETRDLRDSWENLDRVDRGRKISLYVTSYPKRSRTMATFAFGENRVKLGDMAAAVAAATKDTTLDNLLKKYL.

It is found in the cytoplasmic vesicle. It localises to the secretory vesicle. The protein localises to the microneme. Its subcellular location is the secreted. The chain is Microneme protein 21 from Toxoplasma gondii.